The sequence spans 438 residues: MSQANAATKASSDVFFNASLEDIDPEIFGAIRNELGRQRHEIELIASENIVSRAVLEAQGSILTNKYAEGYPGKRYYGGCQYVDVVEELAIERAKKLFSAEFANVQPNSGSQMNQAVFLALLQPGDTFMGLDLNSGGHLTHGSPVNMSGKWFNVVSYGVRKDDHLLDMDEVARLARENKPKLILAGGTAYSRIWDWKRFREIADEVGAYLMVDMAHIAGLVAGGQHPSPVPHAHVCTTTTHKSLRGPRGGMILTNDADIAKKINSAVFPGLQGGPLMHVIAGKAVAFAEALKLEFKLYAKNVVDNARALAEELKSHGLDIVSGGTDNHLMLVDLRPKNATGKRAEAALGRANITCNKNGIPFDPEKPFVTSGVRLGTPAGTTRGFGVAEFKEIGSLIAEVLDGLKVANSDEGNAAVEQAVKEKVIALTGRFPMYGYQG.

(6S)-5,6,7,8-tetrahydrofolate contacts are provided by residues Leu-133 and 137 to 139 (GHL). Lys-242 carries the N6-(pyridoxal phosphate)lysine modification.

Belongs to the SHMT family. In terms of assembly, homodimer. Requires pyridoxal 5'-phosphate as cofactor.

It localises to the cytoplasm. It carries out the reaction (6R)-5,10-methylene-5,6,7,8-tetrahydrofolate + glycine + H2O = (6S)-5,6,7,8-tetrahydrofolate + L-serine. It participates in one-carbon metabolism; tetrahydrofolate interconversion. The protein operates within amino-acid biosynthesis; glycine biosynthesis; glycine from L-serine: step 1/1. Its function is as follows. Catalyzes the reversible interconversion of serine and glycine with tetrahydrofolate (THF) serving as the one-carbon carrier. This reaction serves as the major source of one-carbon groups required for the biosynthesis of purines, thymidylate, methionine, and other important biomolecules. Also exhibits THF-independent aldolase activity toward beta-hydroxyamino acids, producing glycine and aldehydes, via a retro-aldol mechanism. This chain is Serine hydroxymethyltransferase, found in Brucella canis (strain ATCC 23365 / NCTC 10854 / RM-666).